Here is a 216-residue protein sequence, read N- to C-terminus: ATP-dependent Clp protease proteolytic subunit (216 aa).

Ser101 acts as the Nucleophile in catalysis. His126 is a catalytic residue.

It belongs to the peptidase S14 family. In terms of assembly, component of the chloroplastic Clp protease core complex.

It is found in the plastid. Its subcellular location is the chloroplast stroma. It carries out the reaction Hydrolysis of proteins to small peptides in the presence of ATP and magnesium. alpha-casein is the usual test substrate. In the absence of ATP, only oligopeptides shorter than five residues are hydrolyzed (such as succinyl-Leu-Tyr-|-NHMec, and Leu-Tyr-Leu-|-Tyr-Trp, in which cleavage of the -Tyr-|-Leu- and -Tyr-|-Trp bonds also occurs).. Its function is as follows. Cleaves peptides in various proteins in a process that requires ATP hydrolysis. Has a chymotrypsin-like activity. Plays a major role in the degradation of misfolded proteins. The chain is ATP-dependent Clp protease proteolytic subunit from Zea mays (Maize).